The primary structure comprises 215 residues: Flagellin B1 (215 aa).

Residues 1–12 constitute a propeptide that is removed on maturation; that stretch reads MSVKNFMNNKKG.

It belongs to the archaeal flagellin family.

It localises to the archaeal flagellum. Flagellin is the subunit protein which polymerizes to form the filaments of archaeal flagella. The polypeptide is Flagellin B1 (flaB1) (Methanococcus vannielii (strain ATCC 35089 / DSM 1224 / JCM 13029 / OCM 148 / SB)).